Reading from the N-terminus, the 267-residue chain is Regulatory protein RecX (267 aa).

It belongs to the RecX family.

It localises to the cytoplasm. In terms of biological role, modulates RecA activity. This Staphylococcus carnosus (strain TM300) protein is Regulatory protein RecX.